Consider the following 391-residue polypeptide: Aspartate carbamoyltransferase 3, chloroplastic (391 aa).

A chloroplast-targeting transit peptide spans 1-69; sequence MTASSSLFSC…SKCDKMIKTR (69 aa). Carbamoyl phosphate contacts are provided by R137 and T138. R137 and T138 together coordinate UMP. Residue K167 participates in L-aspartate binding. Carbamoyl phosphate is bound by residues R188, H216, and Q219. Positions 188 and 216 each coordinate UMP. UMP contacts are provided by R249 and R311. L-aspartate contacts are provided by R249 and R311. Residues L351 and P352 each contribute to the carbamoyl phosphate site.

The protein belongs to the aspartate/ornithine carbamoyltransferase superfamily. ATCase family. In terms of assembly, homotrimer.

It localises to the plastid. Its subcellular location is the chloroplast. The enzyme catalyses carbamoyl phosphate + L-aspartate = N-carbamoyl-L-aspartate + phosphate + H(+). It participates in pyrimidine metabolism; UMP biosynthesis via de novo pathway; (S)-dihydroorotate from bicarbonate: step 2/3. With respect to regulation, feedback inhibited by UMP. Its function is as follows. Catalyzes the condensation of carbamoyl phosphate and aspartate to form carbamoyl aspartate and inorganic phosphate, the committed step in the de novo pyrimidine nucleotide biosynthesis pathway. This Pisum sativum (Garden pea) protein is Aspartate carbamoyltransferase 3, chloroplastic (PYRB3).